Reading from the N-terminus, the 238-residue chain is ATP synthase subunit a (238 aa).

A run of 5 helical transmembrane segments spans residues 16–36 (LIWL…TVLF), 79–99 (GLFM…FFPV), 103–123 (FVFG…SSLL), 129–149 (GLMS…MVVV), and 209–229 (VFGA…CVLL).

This sequence belongs to the ATPase A chain family. F-type ATPases have 2 components, CF(1) - the catalytic core - and CF(0) - the membrane proton channel. CF(1) has five subunits: alpha(3), beta(3), gamma(1), delta(1), epsilon(1). CF(0) has three main subunits: a, b and c.

It is found in the mitochondrion inner membrane. In terms of biological role, mitochondrial membrane ATP synthase (F(1)F(0) ATP synthase or Complex V) produces ATP from ADP in the presence of a proton gradient across the membrane which is generated by electron transport complexes of the respiratory chain. F-type ATPases consist of two structural domains, F(1) - containing the extramembraneous catalytic core and F(0) - containing the membrane proton channel, linked together by a central stalk and a peripheral stalk. During catalysis, ATP synthesis in the catalytic domain of F(1) is coupled via a rotary mechanism of the central stalk subunits to proton translocation. Key component of the proton channel; it may play a direct role in the translocation of protons across the membrane. This is ATP synthase subunit a (ATP6) from Mytilus edulis (Blue mussel).